The following is a 617-amino-acid chain: Secretogranin-2 (617 aa).

An N-terminal signal peptide occupies residues methionine 1–alanine 27. Positions alanine 28–phenylalanine 30 are excised as a propeptide. Residues asparagine 123 to methionine 147 form a disordered region. Tyrosine 151 is subject to Sulfotyrosine. Phosphoserine occurs at positions 174, 268, 432, 532, 555, and 556. The disordered stretch occupies residues asparagine 552–glutamine 583.

This sequence belongs to the chromogranin/secretogranin protein family. In terms of assembly, interacts with Secretogranin III/SCG3.

The protein localises to the secreted. Neuroendocrine protein of the granin family that regulates the biogenesis of secretory granules. The protein is Secretogranin-2 (SCG2) of Macaca fascicularis (Crab-eating macaque).